Consider the following 1028-residue polypeptide: Formate dehydrogenase major subunit (1028 aa).

A signal peptide (tat-type signal) is located at residues Met1–Ala33. Residues Ala43 to Ser114 form the 4Fe-4S Mo/W bis-MGD-type domain. [4Fe-4S] cluster-binding residues include Cys50, Cys53, Cys57, and Cys100. Sec204 is a non-standard amino acid (selenocysteine).

Belongs to the prokaryotic molybdopterin-containing oxidoreductase family. As to quaternary structure, formate dehydrogenase is a membrane-bound complex, formed by subunits alpha, beta and gamma. Mo-bis(molybdopterin guanine dinucleotide) serves as cofactor. It depends on [4Fe-4S] cluster as a cofactor. Post-translationally, predicted to be exported by the Tat system. The position of the signal peptide cleavage has not been experimentally proven.

Its subcellular location is the periplasm. The enzyme catalyses formate + NAD(+) = CO2 + NADH. Functionally, allows to use formate as major electron donor during anaerobic respiration. Subunit alpha possibly forms the active site. This chain is Formate dehydrogenase major subunit (fdxG), found in Haemophilus influenzae (strain ATCC 51907 / DSM 11121 / KW20 / Rd).